Here is a 572-residue protein sequence, read N- to C-terminus: Phosphoenolpyruvate-protein phosphotransferase (572 aa).

His-190 serves as the catalytic Tele-phosphohistidine intermediate. Phosphoenolpyruvate contacts are provided by Arg-297 and Arg-333. Mg(2+) is bound by residues Glu-432 and Asp-456. Phosphoenolpyruvate contacts are provided by residues Asn-455–Asp-456 and Arg-466. Catalysis depends on Cys-503, which acts as the Proton donor.

This sequence belongs to the PEP-utilizing enzyme family. As to quaternary structure, homodimer. Requires Mg(2+) as cofactor.

The protein localises to the cytoplasm. It carries out the reaction L-histidyl-[protein] + phosphoenolpyruvate = N(pros)-phospho-L-histidyl-[protein] + pyruvate. In terms of biological role, general (non sugar-specific) component of the phosphoenolpyruvate-dependent sugar phosphotransferase system (sugar PTS). This major carbohydrate active-transport system catalyzes the phosphorylation of incoming sugar substrates concomitantly with their translocation across the cell membrane. Enzyme I transfers the phosphoryl group from phosphoenolpyruvate (PEP) to the phosphoryl carrier protein (HPr). This is Phosphoenolpyruvate-protein phosphotransferase (ptsI) from Listeria monocytogenes serovar 1/2a (strain ATCC BAA-679 / EGD-e).